A 510-amino-acid chain; its full sequence is Probable cytosol aminopeptidase (510 aa).

Mn(2+)-binding residues include Lys-272 and Asp-277. Lys-284 is a catalytic residue. Positions 296, 355, and 357 each coordinate Mn(2+). Residue Arg-359 is part of the active site.

Belongs to the peptidase M17 family. The cofactor is Mn(2+).

The protein localises to the cytoplasm. The catalysed reaction is Release of an N-terminal amino acid, Xaa-|-Yaa-, in which Xaa is preferably Leu, but may be other amino acids including Pro although not Arg or Lys, and Yaa may be Pro. Amino acid amides and methyl esters are also readily hydrolyzed, but rates on arylamides are exceedingly low.. It catalyses the reaction Release of an N-terminal amino acid, preferentially leucine, but not glutamic or aspartic acids.. Its function is as follows. Presumably involved in the processing and regular turnover of intracellular proteins. Catalyzes the removal of unsubstituted N-terminal amino acids from various peptides. This is Probable cytosol aminopeptidase from Synechococcus sp. (strain JA-2-3B'a(2-13)) (Cyanobacteria bacterium Yellowstone B-Prime).